A 239-amino-acid chain; its full sequence is tRNA (guanine-N(7)-)-methyltransferase (239 aa).

Glu69, Glu94, Asp121, and Asp144 together coordinate S-adenosyl-L-methionine. Asp144 is an active-site residue. Substrate is bound by residues Lys148, Asp180, and 217–220 (TNFE).

Belongs to the class I-like SAM-binding methyltransferase superfamily. TrmB family. In terms of assembly, monomer.

It catalyses the reaction guanosine(46) in tRNA + S-adenosyl-L-methionine = N(7)-methylguanosine(46) in tRNA + S-adenosyl-L-homocysteine. Its pathway is tRNA modification; N(7)-methylguanine-tRNA biosynthesis. In terms of biological role, catalyzes the formation of N(7)-methylguanine at position 46 (m7G46) in tRNA. The chain is tRNA (guanine-N(7)-)-methyltransferase from Buchnera aphidicola subsp. Schizaphis graminum (strain Sg).